The following is a 99-amino-acid chain: Malonate decarboxylase acyl carrier protein (99 aa).

The residue at position 25 (S25) is an O-(phosphoribosyl dephospho-coenzyme A)serine.

Post-translationally, covalently binds the prosthetic group of malonate decarboxylase.

The protein localises to the cytoplasm. Subunit of malonate decarboxylase, it is an acyl carrier protein to which acetyl and malonyl thioester residues are bound via a 2'-(5''-phosphoribosyl)-3'-dephospho-CoA prosthetic group and turn over during the catalytic mechanism. This chain is Malonate decarboxylase acyl carrier protein (mdcC), found in Klebsiella pneumoniae.